Consider the following 355-residue polypeptide: DNA-directed RNA polymerase subunit alpha (355 aa).

The tract at residues 1–233 is alpha N-terminal domain (alpha-NTD); the sequence is MVREKVRVST…DLFIPFLHKE (233 aa). Residues 268-355 are alpha C-terminal domain (alpha-CTD); it reads KKKIALKSIF…EIYCYSIFFH (88 aa).

The protein belongs to the RNA polymerase alpha chain family. In plastids the minimal PEP RNA polymerase catalytic core is composed of four subunits: alpha, beta, beta', and beta''. When a (nuclear-encoded) sigma factor is associated with the core the holoenzyme is formed, which can initiate transcription.

The protein localises to the plastid. Its subcellular location is the chloroplast. It catalyses the reaction RNA(n) + a ribonucleoside 5'-triphosphate = RNA(n+1) + diphosphate. In terms of biological role, DNA-dependent RNA polymerase catalyzes the transcription of DNA into RNA using the four ribonucleoside triphosphates as substrates. This is DNA-directed RNA polymerase subunit alpha from Jasminum nudiflorum (Winter jasmine).